The chain runs to 222 residues: Triosephosphate isomerase (222 aa).

9 to 11 (NLK) contacts substrate. The active-site Electrophile is the His-93. Glu-141 acts as the Proton acceptor in catalysis. Residues Ile-146, Gly-181, and 202–203 (AS) each bind substrate.

Belongs to the triosephosphate isomerase family. As to quaternary structure, homotetramer; dimer of dimers.

It is found in the cytoplasm. The enzyme catalyses D-glyceraldehyde 3-phosphate = dihydroxyacetone phosphate. It functions in the pathway carbohydrate biosynthesis; gluconeogenesis. It participates in carbohydrate degradation; glycolysis; D-glyceraldehyde 3-phosphate from glycerone phosphate: step 1/1. Functionally, involved in the gluconeogenesis. Catalyzes stereospecifically the conversion of dihydroxyacetone phosphate (DHAP) to D-glyceraldehyde-3-phosphate (G3P). The chain is Triosephosphate isomerase from Methanoculleus marisnigri (strain ATCC 35101 / DSM 1498 / JR1).